A 150-amino-acid polypeptide reads, in one-letter code: Arginine repressor (150 aa).

It belongs to the ArgR family.

It is found in the cytoplasm. It functions in the pathway amino-acid biosynthesis; L-arginine biosynthesis [regulation]. Functionally, regulates arginine biosynthesis genes. This chain is Arginine repressor, found in Staphylococcus carnosus (strain TM300).